A 251-amino-acid chain; its full sequence is Zinc import ATP-binding protein ZnuC (251 aa).

The region spanning 5–220 (VSLENVSVSF…PEFISMFGPR (216 aa)) is the ABC transporter domain. Residue 37–44 (GPNGAGKS) participates in ATP binding.

It belongs to the ABC transporter superfamily. Zinc importer (TC 3.A.1.15.5) family. The complex is composed of two ATP-binding proteins (ZnuC), two transmembrane proteins (ZnuB) and a solute-binding protein (ZnuA).

It is found in the cell inner membrane. It carries out the reaction Zn(2+)(out) + ATP(in) + H2O(in) = Zn(2+)(in) + ADP(in) + phosphate(in) + H(+)(in). In terms of biological role, part of the ABC transporter complex ZnuABC involved in zinc import. Responsible for energy coupling to the transport system. The sequence is that of Zinc import ATP-binding protein ZnuC from Salmonella choleraesuis (strain SC-B67).